Here is a 270-residue protein sequence, read N- to C-terminus: Ribonuclease HII (270 aa).

Residues 84–270 (RYIAGVDEVG…HRNSFLTKLL (187 aa)) form the RNase H type-2 domain. A divalent metal cation is bound by residues Asp90, Glu91, and Asp186.

This sequence belongs to the RNase HII family. Requires Mn(2+) as cofactor. Mg(2+) serves as cofactor.

It localises to the cytoplasm. The enzyme catalyses Endonucleolytic cleavage to 5'-phosphomonoester.. Its function is as follows. Endonuclease that specifically degrades the RNA of RNA-DNA hybrids. The sequence is that of Ribonuclease HII from Clostridium beijerinckii (strain ATCC 51743 / NCIMB 8052) (Clostridium acetobutylicum).